The following is a 122-amino-acid chain: Aspartate 1-decarboxylase (122 aa).

Catalysis depends on Ser-25, which acts as the Schiff-base intermediate with substrate; via pyruvic acid. Ser-25 bears the Pyruvic acid (Ser) mark. Residue Thr-57 coordinates substrate. Tyr-58 serves as the catalytic Proton donor. Gly-73 to Ala-75 contacts substrate.

Belongs to the PanD family. Heterooctamer of four alpha and four beta subunits. Pyruvate is required as a cofactor. In terms of processing, is synthesized initially as an inactive proenzyme, which is activated by self-cleavage at a specific serine bond to produce a beta-subunit with a hydroxyl group at its C-terminus and an alpha-subunit with a pyruvoyl group at its N-terminus.

The protein localises to the cytoplasm. The enzyme catalyses L-aspartate + H(+) = beta-alanine + CO2. It functions in the pathway cofactor biosynthesis; (R)-pantothenate biosynthesis; beta-alanine from L-aspartate: step 1/1. Catalyzes the pyruvoyl-dependent decarboxylation of aspartate to produce beta-alanine. This Bordetella avium (strain 197N) protein is Aspartate 1-decarboxylase.